Consider the following 397-residue polypeptide: MQFSLATLTTLLAFVAAAPANKGFVHAPIKKQSLQAAQSKIPNFASSGPITAELYNELMAYQVQISLGGQTISASIDTGSEILWVWENDSIACQVDQQDCDTDGSYNPKKSSTSKDTGVPFNINYGKGHADGYLYTDNAVIGGASAPGFKFGVNSGDLSSGGFSMVFGIGVNSDASTSISAQLQKSGEISRNLYGMSFSDANLAGTSNDNSEITFGAINTGRYTGSLKTIPRVATQGGYQHFSVSASGKFGDVDLFDNDLVILDSGTTMTYLKSDYYNAFLGGLEDLDITLSDYSGGWHGYPCSENSKINFTYNFSGKEITVTGHDLAIPGNAVNSNVDSSVCFMGVDDGGNMNLFGDTFLRAIYSVYDLERDEVSIAQAAHGKPDNYVVITGDVPN.

The N-terminal stretch at Met1–Ala17 is a signal peptide. A Peptidase A1 domain is found at Tyr61–Ala378. Residue Asp77 is part of the active site. The N-linked (GlcNAc...) asparagine glycan is linked to Asn88. A disulfide bond links Cys93 and Cys100. Asp264 is a catalytic residue. A disulfide bridge connects residues Cys303 and Cys343. N-linked (GlcNAc...) asparagine glycans are attached at residues Asn310 and Asn314.

This sequence belongs to the peptidase A1 family.

Its subcellular location is the secreted. The polypeptide is Acid extracellular protease (AXP1) (Yarrowia lipolytica (strain CLIB 122 / E 150) (Yeast)).